Consider the following 371-residue polypeptide: Cytochrome b (371 aa).

The next 4 helical transmembrane spans lie at 25-45, 69-90, 105-125, and 170-190; these read FGSL…FLAI, WIMQ…YTHI, WLSG…GYVL, and FFAL…IHII. Histidine 75 and histidine 89 together coordinate heme b. Heme b-binding residues include histidine 174 and histidine 188. Residue histidine 193 participates in a ubiquinone binding. A run of 4 helical transmembrane segments spans residues 218-238, 280-300, 312-332, and 339-358; these read YKDM…MTFA, LGGT…PFTH, LTQI…WTAT, and FIYI…IMNP.

The protein belongs to the cytochrome b family. In terms of assembly, the cytochrome bc1 complex contains 3 respiratory subunits (MT-CYB, CYC1 and UQCRFS1), 2 core proteins (UQCRC1 and UQCRC2) and probably 6 low-molecular weight proteins. Heme b is required as a cofactor.

The protein resides in the mitochondrion inner membrane. Component of the ubiquinol-cytochrome c reductase complex (complex III or cytochrome b-c1 complex) that is part of the mitochondrial respiratory chain. The b-c1 complex mediates electron transfer from ubiquinol to cytochrome c. Contributes to the generation of a proton gradient across the mitochondrial membrane that is then used for ATP synthesis. The chain is Cytochrome b (MT-CYB) from Micruroides euryxanthus (Sonoran coral snake).